A 499-amino-acid polypeptide reads, in one-letter code: MGSPLCVPIFLAVCILIQSSTHGQSLRPEPFGRRARVTATKKTLLETETRFLLFKDKANKGCQIRLHHADTLQECGFNSSLPLVMIVHGWSVDGLLESWIWQMVAALKSQPARPVNVGLVDWISLAHSHYAVAVRNARLVGQEVAALLQWLEESAPFSRSNVHLIGYSLGAHVAGFAGSYISGKHKIGRITGLDAAGPLFEGTSASDRLSPDDATFVDAIHTFTREHMGLSVGIKQPVGHYDFYPNGGSFQPGCHFLELYKHIAQHGLNALSQTIKCAHERSVHLFIDSLLHPSMQSTAYQCSDMDSFSQGLCLGCTKGRCNTLGYHIRQEPLSKGKRLFLVTQAQSPFRVYHYQFKIQFINQIEKPLEPTFTMSLLGTKEEMQKIPITLGEGITSNKTYSFLITLNLDIGELMVIKFKWENSAVWANVWNTVQTIIPWGIKPRNSGLILKTIRVKAGETQQRMTFCSENMDDLQLHPTQEKNFVRCEVNPKKLKLKIK.

The signal sequence occupies residues 1–21 (MGSPLCVPIFLAVCILIQSST). Asparagine 78 is a glycosylation site (N-linked (GlcNAc...) asparagine). The active-site Nucleophile is serine 168. Catalysis depends on aspartate 194, which acts as the Charge relay system. The tract at residues 254–277 (CHFLELYKHIAQHGLNALSQTIKC) is essential for determining substrate specificity. The active-site Charge relay system is histidine 279. One can recognise a PLAT domain in the interval 352 to 486 (YHYQFKIQFI…HPTQEKNFVR (135 aa)). A glycan (N-linked (GlcNAc...) asparagine) is linked at asparagine 397.

It belongs to the AB hydrolase superfamily. Lipase family. In terms of assembly, homodimer.

It localises to the secreted. It carries out the reaction a triacylglycerol + H2O = a diacylglycerol + a fatty acid + H(+). The enzyme catalyses a 1-acyl-sn-glycero-3-phosphocholine + H2O = sn-glycerol 3-phosphocholine + a fatty acid + H(+). The catalysed reaction is a 1,2-diacyl-sn-glycero-3-phosphocholine + H2O = a 2-acyl-sn-glycero-3-phosphocholine + a fatty acid + H(+). It catalyses the reaction 1,2,3-tri-(9Z-octadecenoyl)-glycerol + H2O = di-(9Z)-octadecenoylglycerol + (9Z)-octadecenoate + H(+). It carries out the reaction 1,2-di-(9Z-octadecenoyl)-sn-glycero-3-phosphocholine + H2O = (9Z-octadecenoyl)-sn-glycero-3-phosphocholine + (9Z)-octadecenoate + H(+). The enzyme catalyses 1,2,3-tributanoylglycerol + H2O = dibutanoylglycerol + butanoate + H(+). The catalysed reaction is 1,2-dihexadecanoyl-sn-glycero-3-phosphocholine + H2O = hexadecanoyl-sn-glycero-3-phosphocholine + hexadecanoate + H(+). It catalyses the reaction 1,2-di-(9Z-octadecenoyl)-sn-glycerol + H2O = 2-(9Z-octadecenoyl)-glycerol + (9Z)-octadecenoate + H(+). It carries out the reaction 1,2,3-tri-(9Z-octadecenoyl)-glycerol + H2O = 2,3-di-(9Z)-octadecenoyl-sn-glycerol + (9Z)-octadecenoate + H(+). The enzyme catalyses 1-(9Z-octadecenoyl)-sn-glycero-3-phospho-L-serine + H2O = sn-glycero-3-phospho-L-serine + (9Z)-octadecenoate + H(+). The catalysed reaction is 1-hexadecanoyl-sn-glycero-3-phosphocholine + H2O = sn-glycerol 3-phosphocholine + hexadecanoate + H(+). It catalyses the reaction 1,3-di-(9Z-octadecenoyl)-glycerol + H2O = 3-(9Z-octadecenoyl)-sn-glycerol + (9Z)-octadecenoate + H(+). Functionally, catalyzes the hydrolysis of triglycerides and phospholipids present in circulating plasma lipoproteins, including chylomicrons, intermediate density lipoproteins (IDL), low density lipoproteins (LDL) of large size and high density lipoproteins (HDL), releasing free fatty acids (FFA) and smaller lipoprotein particles. Also exhibits lysophospholipase activity. Can hydrolyze both neutral lipid and phospholipid substrates but shows a greater binding affinity for neutral lipid substrates than phospholipid substrates. In native LDL, preferentially hydrolyzes the phosphatidylcholine species containing polyunsaturated fatty acids at sn-2 position. The protein is Hepatic triacylglycerol lipase (LIPC) of Oryctolagus cuniculus (Rabbit).